Here is a 466-residue protein sequence, read N- to C-terminus: Dihydrolipoyl dehydrogenase 3 (466 aa).

Residues Glu33–Cys42, Lys51, and Gly115 contribute to the FAD site. Cys42 and Cys47 form a disulfide bridge. NAD(+) is bound by residues Gly181 to Ile185, Glu204, Val238, and Ala271 to Arg274. The FAD site is built by Asp313 and Ala321. The active-site Proton acceptor is the His445.

Belongs to the class-I pyridine nucleotide-disulfide oxidoreductase family. Homodimer. FAD is required as a cofactor.

It localises to the cytoplasm. It carries out the reaction N(6)-[(R)-dihydrolipoyl]-L-lysyl-[protein] + NAD(+) = N(6)-[(R)-lipoyl]-L-lysyl-[protein] + NADH + H(+). Functionally, LPD-3 may substitute for lipoamide dehydrogenase of the 2-oxoglutarate dehydrogenase and pyruvate multienzyme complexes when the latter is inactive or missing. The chain is Dihydrolipoyl dehydrogenase 3 (lpd3) from Pseudomonas putida (Arthrobacter siderocapsulatus).